A 310-amino-acid polypeptide reads, in one-letter code: tRNA-cytidine(32) 2-sulfurtransferase (310 aa).

Residues 48 to 53 (SGGKDS) carry the PP-loop motif motif. The [4Fe-4S] cluster site is built by Cys-123, Cys-126, and Cys-214.

Belongs to the TtcA family. In terms of assembly, homodimer. Mg(2+) is required as a cofactor. [4Fe-4S] cluster serves as cofactor.

It localises to the cytoplasm. The catalysed reaction is cytidine(32) in tRNA + S-sulfanyl-L-cysteinyl-[cysteine desulfurase] + AH2 + ATP = 2-thiocytidine(32) in tRNA + L-cysteinyl-[cysteine desulfurase] + A + AMP + diphosphate + H(+). It functions in the pathway tRNA modification. Catalyzes the ATP-dependent 2-thiolation of cytidine in position 32 of tRNA, to form 2-thiocytidine (s(2)C32). The sulfur atoms are provided by the cysteine/cysteine desulfurase (IscS) system. The protein is tRNA-cytidine(32) 2-sulfurtransferase of Vibrio vulnificus (strain YJ016).